The sequence spans 155 residues: Arginine repressor (155 aa).

This sequence belongs to the ArgR family.

It is found in the cytoplasm. Its pathway is amino-acid biosynthesis; L-arginine biosynthesis [regulation]. Its function is as follows. Regulates arginine biosynthesis genes. The sequence is that of Arginine repressor from Mannheimia succiniciproducens (strain KCTC 0769BP / MBEL55E).